Here is a 645-residue protein sequence, read N- to C-terminus: Phosphomethylpyrimidine synthase (645 aa).

Positions 1 to 12 are enriched in polar residues; that stretch reads MSHNTVIPTTDI. The interval 1–25 is disordered; sequence MSHNTVIPTTDISPKPDPARPRKAQ. Residues asparagine 253, methionine 282, tyrosine 311, histidine 347, 367–369, 408–411, and glutamate 447 each bind substrate; these read SRG and DGLR. Zn(2+) is bound at residue histidine 451. Tyrosine 474 contributes to the substrate binding site. Histidine 515 contacts Zn(2+). [4Fe-4S] cluster-binding residues include cysteine 595, cysteine 598, and cysteine 603.

This sequence belongs to the ThiC family. As to quaternary structure, homodimer. The cofactor is [4Fe-4S] cluster.

The catalysed reaction is 5-amino-1-(5-phospho-beta-D-ribosyl)imidazole + S-adenosyl-L-methionine = 4-amino-2-methyl-5-(phosphooxymethyl)pyrimidine + CO + 5'-deoxyadenosine + formate + L-methionine + 3 H(+). The protein operates within cofactor biosynthesis; thiamine diphosphate biosynthesis. Functionally, catalyzes the synthesis of the hydroxymethylpyrimidine phosphate (HMP-P) moiety of thiamine from aminoimidazole ribotide (AIR) in a radical S-adenosyl-L-methionine (SAM)-dependent reaction. In Photorhabdus laumondii subsp. laumondii (strain DSM 15139 / CIP 105565 / TT01) (Photorhabdus luminescens subsp. laumondii), this protein is Phosphomethylpyrimidine synthase.